Reading from the N-terminus, the 337-residue chain is Nicotinate-nucleotide--dimethylbenzimidazole phosphoribosyltransferase (337 aa).

The active-site Proton acceptor is the Glu305.

This sequence belongs to the CobT family.

The enzyme catalyses 5,6-dimethylbenzimidazole + nicotinate beta-D-ribonucleotide = alpha-ribazole 5'-phosphate + nicotinate + H(+). Its pathway is nucleoside biosynthesis; alpha-ribazole biosynthesis; alpha-ribazole from 5,6-dimethylbenzimidazole: step 1/2. Its function is as follows. Catalyzes the synthesis of alpha-ribazole-5'-phosphate from nicotinate mononucleotide (NAMN) and 5,6-dimethylbenzimidazole (DMB). This chain is Nicotinate-nucleotide--dimethylbenzimidazole phosphoribosyltransferase, found in Jannaschia sp. (strain CCS1).